The following is a 260-amino-acid chain: Hydroxyethylthiazole kinase (260 aa).

Substrate is bound at residue Met-38. Residues Lys-114 and Ser-161 each coordinate ATP. Gly-188 provides a ligand contact to substrate.

This sequence belongs to the Thz kinase family. Mg(2+) is required as a cofactor.

It carries out the reaction 5-(2-hydroxyethyl)-4-methylthiazole + ATP = 4-methyl-5-(2-phosphooxyethyl)-thiazole + ADP + H(+). It functions in the pathway cofactor biosynthesis; thiamine diphosphate biosynthesis; 4-methyl-5-(2-phosphoethyl)-thiazole from 5-(2-hydroxyethyl)-4-methylthiazole: step 1/1. In terms of biological role, catalyzes the phosphorylation of the hydroxyl group of 4-methyl-5-beta-hydroxyethylthiazole (THZ). The sequence is that of Hydroxyethylthiazole kinase from Campylobacter lari (strain RM2100 / D67 / ATCC BAA-1060).